Consider the following 148-residue polypeptide: Small ribosomal subunit protein uS7c (148 aa).

It belongs to the universal ribosomal protein uS7 family. Part of the 30S ribosomal subunit.

It localises to the plastid. It is found in the chloroplast. Its function is as follows. One of the primary rRNA binding proteins, it binds directly to 16S rRNA where it nucleates assembly of the head domain of the 30S subunit. The protein is Small ribosomal subunit protein uS7c (rps7) of Cyanidioschyzon merolae (strain NIES-3377 / 10D) (Unicellular red alga).